A 207-amino-acid polypeptide reads, in one-letter code: Large ribosomal subunit protein uL3 (207 aa).

The disordered stretch occupies residues 126–149 (GPASHGSKKWHRRPGSIGQRKTPG).

The protein belongs to the universal ribosomal protein uL3 family. In terms of assembly, part of the 50S ribosomal subunit. Forms a cluster with proteins L14 and L19.

Its function is as follows. One of the primary rRNA binding proteins, it binds directly near the 3'-end of the 23S rRNA, where it nucleates assembly of the 50S subunit. The sequence is that of Large ribosomal subunit protein uL3 from Deinococcus geothermalis (strain DSM 11300 / CIP 105573 / AG-3a).